We begin with the raw amino-acid sequence, 367 residues long: MNGSQTLVVKLGTSVLTGGSLRLNRAHIVELVRQCAQQHAAGHRIVIVTSGAIAAGREHLGYPELPATIASKQLLAAVGQSRLIQLWEQLFSIYGIHVGQMLLTRADLEDRERFLNARDTMTALLDNRIVPVINENDAVATAEIKVGDNDNLSALAAILAGADKLLLLTDQQGLYTADPRNNPQAELIREVHGIDDALRAIAGDSVSGLGTGGMGTKLQAADVACRAGIDVIIAAGSKPGVVADVIEGKPVGTRFHALETPLENRKRWIFGAPPAGEITVDDGAVDAIMARGSSLLPKGIREVKGDFSRGEVIRIRNLTGRDLAHGVSRYNSDAMRMIAGHHSQEISEILGYEYGPVAVHRDDMIVS.

ATP is bound at residue K10. Substrate-binding residues include S50, D137, and N149. Residues 169–170 and 211–217 each bind ATP; these read TD and TGGMGTK. The PUA domain occupies 275-353; sequence AGEITVDDGA…QEISEILGYE (79 aa).

Belongs to the glutamate 5-kinase family.

It localises to the cytoplasm. The enzyme catalyses L-glutamate + ATP = L-glutamyl 5-phosphate + ADP. It functions in the pathway amino-acid biosynthesis; L-proline biosynthesis; L-glutamate 5-semialdehyde from L-glutamate: step 1/2. Its function is as follows. Catalyzes the transfer of a phosphate group to glutamate to form L-glutamate 5-phosphate. This is Glutamate 5-kinase from Serratia proteamaculans (strain 568).